A 381-amino-acid polypeptide reads, in one-letter code: Transcriptional regulatory protein FlgR (381 aa).

The Response regulatory domain occupies 2–113; sequence KIAIVEDDIN…LLLESIYRTK (112 aa). Position 51 is a 4-aspartylphosphate (D51). The Sigma-54 factor interaction domain maps to 136–365; that stretch reads FLAASKALEE…LLGVVERAAI (230 aa). Residues 164-171 and 227-236 contribute to the ATP site; these read GESGVGKE and ANKGTIFLDE.

Post-translationally, phosphorylated by FlgS.

Its function is as follows. Member of the two-component regulatory system FlgR/FlgS that induces the transcriptional induction of the genes needed in motility and flagellar biogenesis. Upon phosphorylation by FlgS, functions as a transcriptional regulator and activates transcription of RpoN-dependent flagellar genes. This is Transcriptional regulatory protein FlgR (flgR) from Helicobacter pylori (strain ATCC 700392 / 26695) (Campylobacter pylori).